We begin with the raw amino-acid sequence, 394 residues long: Chalcone synthase 2 (394 aa).

C167 is a catalytic residue.

Belongs to the thiolase-like superfamily. Chalcone/stilbene synthases family.

It carries out the reaction (E)-4-coumaroyl-CoA + 3 malonyl-CoA + 3 H(+) = 2',4,4',6'-tetrahydroxychalcone + 3 CO2 + 4 CoA. Its pathway is secondary metabolite biosynthesis; flavonoid biosynthesis. The primary product of this enzyme is 4,2',4',6'-tetrahydroxychalcone (also termed naringenin-chalcone or chalcone) which can under specific conditions spontaneously isomerize into naringenin. This chain is Chalcone synthase 2 (CHS2), found in Secale cereale (Rye).